Here is a 462-residue protein sequence, read N- to C-terminus: ATP synthase subunit beta 2 (462 aa).

Residue 151–158 participates in ATP binding; that stretch reads GGAGVGKT.

This sequence belongs to the ATPase alpha/beta chains family. As to quaternary structure, F-type ATPases have 2 components, CF(1) - the catalytic core - and CF(0) - the membrane proton channel. CF(1) has five subunits: alpha(3), beta(3), gamma(1), delta(1), epsilon(1). CF(0) has three main subunits: a(1), b(2) and c(9-12). The alpha and beta chains form an alternating ring which encloses part of the gamma chain. CF(1) is attached to CF(0) by a central stalk formed by the gamma and epsilon chains, while a peripheral stalk is formed by the delta and b chains.

It is found in the cell inner membrane. It carries out the reaction ATP + H2O + 4 H(+)(in) = ADP + phosphate + 5 H(+)(out). Functionally, produces ATP from ADP in the presence of a proton gradient across the membrane. The catalytic sites are hosted primarily by the beta subunits. In Chlorobaculum tepidum (strain ATCC 49652 / DSM 12025 / NBRC 103806 / TLS) (Chlorobium tepidum), this protein is ATP synthase subunit beta 2.